A 520-amino-acid chain; its full sequence is Maturase K (520 aa).

It belongs to the intron maturase 2 family. MatK subfamily.

The protein localises to the plastid. It is found in the chloroplast. Usually encoded in the trnK tRNA gene intron. Probably assists in splicing its own and other chloroplast group II introns. This is Maturase K from Galanthus elwesii (Giant snowdrop).